The sequence spans 325 residues: Hydroxymethylglutaryl-CoA lyase, mitochondrial (325 aa).

Residues 1–27 (MATVRKAFPQRLVGLASLRAASTSSMG) constitute a mitochondrion transit peptide. One can recognise a Pyruvate carboxyltransferase domain in the interval 33–300 (VKIVEVGPRD…HTGVNLQKLL (268 aa)). Residue R41 participates in substrate binding. D42 contributes to the a divalent metal cation binding site. K48 bears the N6-acetyllysine; alternate mark. At K48 the chain carries N6-succinyllysine; alternate. Position 111 is an N6-acetyllysine (K111). 2 positions are modified to N6-acetyllysine; alternate: K137 and K179. N6-succinyllysine; alternate occurs at positions 137 and 179. H233 and H235 together coordinate a divalent metal cation. Residue C266 is part of the active site. An a divalent metal cation-binding site is contributed by N275. A Microbody targeting signal motif is present at residues 323 to 325 (CKL). At K324 the chain carries N6-acetyllysine.

The protein belongs to the HMG-CoA lyase family. In terms of assembly, homodimer; disulfide-linked. Can also form homotetramers. As to expression, in suckling rat, highest levels in liver and in intestine. Lower levels in heart, kidney and cerebellum. Weak expression in brain cortex, medulla and midbrain. Levels decrease slightly during weaning.

It localises to the mitochondrion matrix. The protein localises to the peroxisome. The catalysed reaction is (3S)-3-hydroxy-3-methylglutaryl-CoA = acetoacetate + acetyl-CoA. Its pathway is metabolic intermediate metabolism; (S)-3-hydroxy-3-methylglutaryl-CoA degradation; acetoacetate from (S)-3-hydroxy-3-methylglutaryl-CoA: step 1/1. Functionally, mitochondrial 3-hydroxy-3-methylglutaryl-CoA lyase that catalyzes a cation-dependent cleavage of (S)-3-hydroxy-3-methylglutaryl-CoA into acetyl-CoA and acetoacetate, a key step in ketogenesis. Terminal step in leucine catabolism. Ketone bodies (beta-hydroxybutyrate, acetoacetate and acetone) are essential as an alternative source of energy to glucose, as lipid precursors and as regulators of metabolism. This Rattus norvegicus (Rat) protein is Hydroxymethylglutaryl-CoA lyase, mitochondrial (Hmgcl).